We begin with the raw amino-acid sequence, 248 residues long: Large ribosomal subunit protein uL30 (248 aa).

The segment at 22–42 (KSQEKARAERQAEIEKKKAAN) is disordered. Residues 24 to 42 (QEKARAERQAEIEKKKAAN) are compositionally biased toward basic and acidic residues.

This sequence belongs to the universal ribosomal protein uL30 family. As to quaternary structure, component of the large ribosomal subunit (LSU). Mature N.crassa ribosomes consist of a small (40S) and a large (60S) subunit. The 40S small subunit contains 1 molecule of ribosomal RNA (18S rRNA) and at least 32 different proteins. The large 60S subunit contains 3 rRNA molecules (26S, 5.8S and 5S rRNA) and at least 42 different proteins.

The protein resides in the cytoplasm. Functionally, component of the ribosome, a large ribonucleoprotein complex responsible for the synthesis of proteins in the cell. The small ribosomal subunit (SSU) binds messenger RNAs (mRNAs) and translates the encoded message by selecting cognate aminoacyl-transfer RNA (tRNA) molecules. The large subunit (LSU) contains the ribosomal catalytic site termed the peptidyl transferase center (PTC), which catalyzes the formation of peptide bonds, thereby polymerizing the amino acids delivered by tRNAs into a polypeptide chain. The nascent polypeptides leave the ribosome through a tunnel in the LSU and interact with protein factors that function in enzymatic processing, targeting, and the membrane insertion of nascent chains at the exit of the ribosomal tunnel. The sequence is that of Large ribosomal subunit protein uL30 (rpl-7) from Neurospora crassa (strain ATCC 24698 / 74-OR23-1A / CBS 708.71 / DSM 1257 / FGSC 987).